The sequence spans 375 residues: Methylthioribose-1-phosphate isomerase (375 aa).

Asp259 (proton donor) is an active-site residue.

It belongs to the eIF-2B alpha/beta/delta subunits family. MtnA subfamily.

It localises to the cytoplasm. The protein localises to the nucleus. The enzyme catalyses 5-(methylsulfanyl)-alpha-D-ribose 1-phosphate = 5-(methylsulfanyl)-D-ribulose 1-phosphate. It participates in amino-acid biosynthesis; L-methionine biosynthesis via salvage pathway; L-methionine from S-methyl-5-thio-alpha-D-ribose 1-phosphate: step 1/6. Functionally, catalyzes the interconversion of methylthioribose-1-phosphate (MTR-1-P) into methylthioribulose-1-phosphate (MTRu-1-P). In Populus trichocarpa (Western balsam poplar), this protein is Methylthioribose-1-phosphate isomerase.